Consider the following 214-residue polypeptide: Proteasome subunit beta (214 aa).

Residues 1–11 (MLDTSQEIMKG) constitute a propeptide, removed in mature form; by autocatalysis. The Nucleophile role is filled by Thr12.

The protein belongs to the peptidase T1B family. In terms of assembly, the 20S proteasome core is composed of 14 alpha and 14 beta subunits that assemble into four stacked heptameric rings, resulting in a barrel-shaped structure. The two inner rings, each composed of seven catalytic beta subunits, are sandwiched by two outer rings, each composed of seven alpha subunits. The catalytic chamber with the active sites is on the inside of the barrel. Has a gated structure, the ends of the cylinder being occluded by the N-termini of the alpha-subunits. Is capped at one or both ends by the proteasome regulatory ATPase, PAN.

The protein localises to the cytoplasm. The catalysed reaction is Cleavage of peptide bonds with very broad specificity.. The formation of the proteasomal ATPase PAN-20S proteasome complex, via the docking of the C-termini of PAN into the intersubunit pockets in the alpha-rings, triggers opening of the gate for substrate entry. Interconversion between the open-gate and close-gate conformations leads to a dynamic regulation of the 20S proteasome proteolysis activity. Functionally, component of the proteasome core, a large protease complex with broad specificity involved in protein degradation. In Methanoculleus marisnigri (strain ATCC 35101 / DSM 1498 / JR1), this protein is Proteasome subunit beta.